The primary structure comprises 224 residues: Proteasome subunit beta (224 aa).

A propeptide spans 1–6 (MDVMKG) (removed in mature form; by autocatalysis). Thr7 functions as the Nucleophile in the catalytic mechanism.

The protein belongs to the peptidase T1B family. As to quaternary structure, the 20S proteasome core is composed of 14 alpha and 14 beta subunits that assemble into four stacked heptameric rings, resulting in a barrel-shaped structure. The two inner rings, each composed of seven catalytic beta subunits, are sandwiched by two outer rings, each composed of seven alpha subunits. The catalytic chamber with the active sites is on the inside of the barrel. Has a gated structure, the ends of the cylinder being occluded by the N-termini of the alpha-subunits. Is capped at one or both ends by the proteasome regulatory ATPase, PAN.

The protein resides in the cytoplasm. The enzyme catalyses Cleavage of peptide bonds with very broad specificity.. The formation of the proteasomal ATPase PAN-20S proteasome complex, via the docking of the C-termini of PAN into the intersubunit pockets in the alpha-rings, triggers opening of the gate for substrate entry. Interconversion between the open-gate and close-gate conformations leads to a dynamic regulation of the 20S proteasome proteolysis activity. Its function is as follows. Component of the proteasome core, a large protease complex with broad specificity involved in protein degradation. The chain is Proteasome subunit beta from Methanocaldococcus sp. (strain FS406-22).